The following is a 553-amino-acid chain: Chaperonin GroEL (553 aa).

ATP is bound by residues 30–33 (TLGP), Lys-51, 87–91 (DGTTT), Gly-415, and Asp-495.

It belongs to the chaperonin (HSP60) family. In terms of assembly, forms a cylinder of 14 subunits composed of two heptameric rings stacked back-to-back. Interacts with the co-chaperonin GroES.

The protein resides in the cytoplasm. It carries out the reaction ATP + H2O + a folded polypeptide = ADP + phosphate + an unfolded polypeptide.. Functionally, together with its co-chaperonin GroES, plays an essential role in assisting protein folding. The GroEL-GroES system forms a nano-cage that allows encapsulation of the non-native substrate proteins and provides a physical environment optimized to promote and accelerate protein folding. In Buchnera aphidicola subsp. Tuberolachnus salignus, this protein is Chaperonin GroEL.